Consider the following 89-residue polypeptide: RNA-binding protein Hfq (89 aa).

In terms of domain architecture, Sm spans 9 to 68 (EPFLNALRKEKVPVSIYLVNGIKLQGQIESFDQFVILLRNNVNQMVYKHAISTVVPARNV). Residues 70-89 (TAPPVPTETHAQSSEEFGNI) are disordered. A compositionally biased stretch (polar residues) spans 78–89 (THAQSSEEFGNI).

Belongs to the Hfq family. As to quaternary structure, homohexamer.

RNA chaperone that binds small regulatory RNA (sRNAs) and mRNAs to facilitate mRNA translational regulation in response to envelope stress, environmental stress and changes in metabolite concentrations. Also binds with high specificity to tRNAs. The chain is RNA-binding protein Hfq from Alkalilimnicola ehrlichii (strain ATCC BAA-1101 / DSM 17681 / MLHE-1).